Here is a 213-residue protein sequence, read N- to C-terminus: Adenylate kinase (213 aa).

10 to 15 (GCGKGT) is an ATP binding site. The NMP stretch occupies residues 30-59 (STGDLMRKEISLNTTLGLKCQEYMNAGKYV). Residues threonine 31, arginine 36, 57 to 59 (KYV), 83 to 86 (GYPR), and glutamine 90 contribute to the AMP site. An LID region spans residues 124–161 (NRLVCPLCKASFNLETRKPKQEGLCDFDNTKLVKRSDD). Arginine 125 contacts ATP. 2 residues coordinate Zn(2+): cysteine 128 and cysteine 131. ATP is bound at residue 134–135 (SF). 2 residues coordinate Zn(2+): cysteine 148 and aspartate 151. AMP is bound by residues arginine 158 and arginine 169. Asparagine 197 contributes to the ATP binding site.

Belongs to the adenylate kinase family. In terms of assembly, monomer.

The protein resides in the cytoplasm. It carries out the reaction AMP + ATP = 2 ADP. It functions in the pathway purine metabolism; AMP biosynthesis via salvage pathway; AMP from ADP: step 1/1. Catalyzes the reversible transfer of the terminal phosphate group between ATP and AMP. Plays an important role in cellular energy homeostasis and in adenine nucleotide metabolism. This is Adenylate kinase from Mycoplasma capricolum subsp. capricolum (strain California kid / ATCC 27343 / NCTC 10154).